A 353-amino-acid polypeptide reads, in one-letter code: Inositol-tetrakisphosphate 1-kinase 3 (353 aa).

A disordered region spans residues 1 to 25; it reads MKLTDNEEITMNGTREMETTEQETS. 1D-myo-inositol 1,3,4-trisphosphate contacts are provided by Lys50 and Lys92. Positions 127 and 177 each coordinate ATP. The 213-residue stretch at 138-350 folds into the ATP-grasp domain; sequence NLSDSNGRVG…QSQCKKRALA (213 aa). 1D-myo-inositol 1,3,4-trisphosphate is bound by residues His188 and Lys220. ATP-binding positions include 209–220 and Ser235; that span reads QEFVNHGGVLFK. Residues Asp300, Asp315, and Asn317 each coordinate Mg(2+). Position 317 (Asn317) interacts with 1D-myo-inositol 1,3,4-trisphosphate.

Belongs to the ITPK1 family. As to quaternary structure, monomer. The cofactor is Mg(2+). As to expression, highly expressed in leaves and flowers, and at lower levels in roots, stems, cauline leaves and siliques.

It catalyses the reaction 1D-myo-inositol 3,4,5,6-tetrakisphosphate + ATP = 1D-myo-inositol 1,3,4,5,6-pentakisphosphate + ADP + H(+). It carries out the reaction 1D-myo-inositol 1,3,4-trisphosphate + ATP = 1D-myo-inositol 1,3,4,5-tetrakisphosphate + ADP + H(+). The enzyme catalyses 1D-myo-inositol 1,3,4-trisphosphate + ATP = 1D-myo-inositol 1,3,4,6-tetrakisphosphate + ADP + H(+). Kinase that can phosphorylate various inositol polyphosphate such as Ins(3,4,5,6)P4 or Ins(1,3,4)P3. Phosphorylates Ins(3,4,5,6)P4 to form InsP5. This reaction is thought to have regulatory importance, since Ins(3,4,5,6)P4 is an inhibitor of plasma membrane Ca(2+)-activated Cl(-) channels, while Ins(1,3,4,5,6)P5 is not. Also phosphorylates Ins(1,3,4)P3 or a racemic mixture of Ins(1,4,6)P3 and Ins(3,4,6)P3 to form InsP4. Ins(1,3,4,6)P4 is an essential molecule in the hexakisphosphate (InsP6) pathway. The polypeptide is Inositol-tetrakisphosphate 1-kinase 3 (ITPK3) (Arabidopsis thaliana (Mouse-ear cress)).